The sequence spans 212 residues: 3-demethoxyubiquinol 3-hydroxylase (212 aa).

The Fe cation site is built by glutamate 61, glutamate 91, histidine 94, glutamate 143, glutamate 175, and histidine 178.

Belongs to the COQ7 family. Fe cation serves as cofactor.

It localises to the cell membrane. The enzyme catalyses a 5-methoxy-2-methyl-3-(all-trans-polyprenyl)benzene-1,4-diol + AH2 + O2 = a 3-demethylubiquinol + A + H2O. Its pathway is cofactor biosynthesis; ubiquinone biosynthesis. Catalyzes the hydroxylation of 2-nonaprenyl-3-methyl-6-methoxy-1,4-benzoquinol during ubiquinone biosynthesis. This is 3-demethoxyubiquinol 3-hydroxylase from Methylibium petroleiphilum (strain ATCC BAA-1232 / LMG 22953 / PM1).